The primary structure comprises 120 residues: uncharacterized protein (120 aa).

It belongs to the HesB/IscA family.

This is an uncharacterized protein from Bacillus subtilis (strain 168).